A 190-amino-acid chain; its full sequence is Xanthine phosphoribosyltransferase 1 (190 aa).

Positions 20 and 27 each coordinate xanthine. Ala128–Ala132 serves as a coordination point for 5-phospho-alpha-D-ribose 1-diphosphate. Lys156 contacts xanthine.

Belongs to the purine/pyrimidine phosphoribosyltransferase family. Xpt subfamily. In terms of assembly, homodimer.

It is found in the cytoplasm. It catalyses the reaction XMP + diphosphate = xanthine + 5-phospho-alpha-D-ribose 1-diphosphate. The protein operates within purine metabolism; XMP biosynthesis via salvage pathway; XMP from xanthine: step 1/1. Functionally, converts the preformed base xanthine, a product of nucleic acid breakdown, to xanthosine 5'-monophosphate (XMP), so it can be reused for RNA or DNA synthesis. The polypeptide is Xanthine phosphoribosyltransferase 1 (Clostridium botulinum (strain ATCC 19397 / Type A)).